The following is a 439-amino-acid chain: Skin secretory protein xP2 (439 aa).

Positions 1 to 22 are cleaved as a signal peptide; it reads MNHKLFCVHFLLLILSVCYIQG. The tract at residues 25–351 is disordered; that stretch reads AGGEPAPAEG…VEVGPKTEDC (327 aa). Repeat copies occupy residues 26–33, 34–41, 42–51, 52–59, and 60–69. A 33 X approximate repeats of G-G(0,1)-[EV](0,1)-A-P-[A-P](1,3)-A-E region spans residues 26–343; sequence GGEPAPAEGV…APAPAPAPVE (318 aa). Positions 26 to 345 are enriched in low complexity; that stretch reads GGEPAPAEGV…APAPAPVEVG (320 aa). The stretch at 70 to 77 is one 6; approximate repeat; sequence GAEPAPAD. 9 consecutive repeat copies span residues 78–87, 88–97, 98–107, 108–115, 116–125, 126–135, 136–145, 146–153, and 154–163. Residues 164 to 173 form a 16; approximate repeat; it reads VEAPAPAPAE. Repeat copies occupy residues 174 to 183, 184 to 193, 194 to 203, 204 to 215, 216 to 225, 226 to 235, 236 to 245, 246 to 255, 256 to 265, 266 to 275, 276 to 285, 286 to 293, 294 to 303, and 304 to 313. One copy of the 31; approximate repeat lies at 314–321; it reads GGAPSPAE. The 32; approximate repeat unit spans residues 322–331; it reads GGAPAAAPAE. Residues 332–343 form a 33; approximate repeat; sequence GGAPAPAPAPVE. P-type domains follow at residues 349–392 and 396–439; these read EDCK…FFPR and AQCL…FHQK. 6 disulfide bridges follow: C351–C377, C361–C376, C371–C388, C398–C424, C408–C423, and C418–C435.

Skin.

Its subcellular location is the secreted. May act as a growth factor in the germinal layer of the epidermis. May also be involved in growth of regenerating glands and in protection of the skin from the external environment. This is Skin secretory protein xP2 (p2) from Xenopus laevis (African clawed frog).